We begin with the raw amino-acid sequence, 541 residues long: Chaperonin GroEL (541 aa).

Residues 29–32 (TLGP), 86–90 (DGTTT), glycine 413, 477–479 (DAL), and aspartate 493 contribute to the ATP site.

Belongs to the chaperonin (HSP60) family. In terms of assembly, forms a cylinder of 14 subunits composed of two heptameric rings stacked back-to-back. Interacts with the co-chaperonin GroES.

It localises to the cytoplasm. The enzyme catalyses ATP + H2O + a folded polypeptide = ADP + phosphate + an unfolded polypeptide.. Its function is as follows. Together with its co-chaperonin GroES, plays an essential role in assisting protein folding. The GroEL-GroES system forms a nano-cage that allows encapsulation of the non-native substrate proteins and provides a physical environment optimized to promote and accelerate protein folding. The sequence is that of Chaperonin GroEL from Clostridium botulinum (strain Loch Maree / Type A3).